Consider the following 222-residue polypeptide: N-(5'-phosphoribosyl)anthranilate isomerase (222 aa).

This sequence belongs to the TrpF family.

It catalyses the reaction N-(5-phospho-beta-D-ribosyl)anthranilate = 1-(2-carboxyphenylamino)-1-deoxy-D-ribulose 5-phosphate. The protein operates within amino-acid biosynthesis; L-tryptophan biosynthesis; L-tryptophan from chorismate: step 3/5. The sequence is that of N-(5'-phosphoribosyl)anthranilate isomerase from Rhizobium leguminosarum bv. trifolii (strain WSM2304).